Here is a 427-residue protein sequence, read N- to C-terminus: Kynureninase (427 aa).

Pyridoxal 5'-phosphate-binding positions include Thr-104, Thr-105, 132–135 (FPSD), Asp-213, His-216, and Tyr-238. At Lys-239 the chain carries N6-(pyridoxal phosphate)lysine. Positions 267 and 295 each coordinate pyridoxal 5'-phosphate.

Belongs to the kynureninase family. As to quaternary structure, homodimer. Requires pyridoxal 5'-phosphate as cofactor.

It carries out the reaction L-kynurenine + H2O = anthranilate + L-alanine + H(+). The enzyme catalyses 3-hydroxy-L-kynurenine + H2O = 3-hydroxyanthranilate + L-alanine + H(+). The protein operates within amino-acid degradation; L-kynurenine degradation; L-alanine and anthranilate from L-kynurenine: step 1/1. It participates in cofactor biosynthesis; NAD(+) biosynthesis; quinolinate from L-kynurenine: step 2/3. Functionally, catalyzes the cleavage of L-kynurenine (L-Kyn) and L-3-hydroxykynurenine (L-3OHKyn) into anthranilic acid (AA) and 3-hydroxyanthranilic acid (3-OHAA), respectively. The polypeptide is Kynureninase (Shouchella clausii (strain KSM-K16) (Alkalihalobacillus clausii)).